The chain runs to 261 residues: 5'-nucleotidase SurE (261 aa).

The a divalent metal cation site is built by Asp-8, Asp-9, Ser-40, and Asn-94.

It belongs to the SurE nucleotidase family. Requires a divalent metal cation as cofactor.

Its subcellular location is the cytoplasm. It catalyses the reaction a ribonucleoside 5'-phosphate + H2O = a ribonucleoside + phosphate. Functionally, nucleotidase that shows phosphatase activity on nucleoside 5'-monophosphates. In Anaplasma marginale (strain St. Maries), this protein is 5'-nucleotidase SurE.